The following is a 612-amino-acid chain: Dihydroxy-acid dehydratase (612 aa).

Mg(2+) is bound at residue aspartate 81. Cysteine 122 lines the [2Fe-2S] cluster pocket. Aspartate 123 and lysine 124 together coordinate Mg(2+). Lysine 124 carries the N6-carboxylysine modification. Cysteine 195 contributes to the [2Fe-2S] cluster binding site. Glutamate 491 provides a ligand contact to Mg(2+). The Proton acceptor role is filled by serine 517.

It belongs to the IlvD/Edd family. In terms of assembly, homodimer. It depends on [2Fe-2S] cluster as a cofactor. Requires Mg(2+) as cofactor.

The enzyme catalyses (2R)-2,3-dihydroxy-3-methylbutanoate = 3-methyl-2-oxobutanoate + H2O. The catalysed reaction is (2R,3R)-2,3-dihydroxy-3-methylpentanoate = (S)-3-methyl-2-oxopentanoate + H2O. Its pathway is amino-acid biosynthesis; L-isoleucine biosynthesis; L-isoleucine from 2-oxobutanoate: step 3/4. The protein operates within amino-acid biosynthesis; L-valine biosynthesis; L-valine from pyruvate: step 3/4. Functionally, functions in the biosynthesis of branched-chain amino acids. Catalyzes the dehydration of (2R,3R)-2,3-dihydroxy-3-methylpentanoate (2,3-dihydroxy-3-methylvalerate) into 2-oxo-3-methylpentanoate (2-oxo-3-methylvalerate) and of (2R)-2,3-dihydroxy-3-methylbutanoate (2,3-dihydroxyisovalerate) into 2-oxo-3-methylbutanoate (2-oxoisovalerate), the penultimate precursor to L-isoleucine and L-valine, respectively. The chain is Dihydroxy-acid dehydratase from Psychromonas ingrahamii (strain DSM 17664 / CCUG 51855 / 37).